The chain runs to 138 residues: UPF0201 protein PH1010 (138 aa).

This sequence belongs to the UPF0201 family.

This is UPF0201 protein PH1010 from Pyrococcus horikoshii (strain ATCC 700860 / DSM 12428 / JCM 9974 / NBRC 100139 / OT-3).